A 36-amino-acid polypeptide reads, in one-letter code: Thrombin (36 aa).

The region spanning 19–36 (IVKGIDAEVASAPMQVML) is the Peptidase S1 domain.

Belongs to the peptidase S1 family. In terms of assembly, forms a heterodimer with SERPINA5. The gamma-carboxyglutamyl residues, which bind calcium ions, result from the carboxylation of glutamyl residues by a microsomal enzyme, the vitamin K-dependent carboxylase. The modified residues are necessary for the calcium-dependent interaction with a negatively charged phospholipid surface, which is essential for the conversion of prothrombin to thrombin. Post-translationally, N-glycosylated. Expressed by the liver and secreted in plasma.

It is found in the secreted. It catalyses the reaction Selective cleavage of Arg-|-Gly bonds in fibrinogen to form fibrin and release fibrinopeptides A and B.. Inhibited by SERPINA5. Functionally, thrombin, which cleaves bonds after Arg and Lys, converts fibrinogen to fibrin and activates factors V, VII, VIII, XIII, and, in complex with thrombomodulin, protein C. Functions in blood homeostasis, inflammation and wound healing. The chain is Thrombin from Salmo salar (Atlantic salmon).